We begin with the raw amino-acid sequence, 607 residues long: MNRVNDMSPVEGDLGLQLSSEADKKFDAYMKRHGLFEPGNLSNNDKERNLEDQFNSMKLSPVASSKENYPDNHMHSKHISKLPIASPIPRGLDRSGELSYKDNNHWSDRSSTGSPRWENGSMNLSVEEMEKVVQPKVKRMATICQMFFLDHYFEQLHYLYTRKQRARLFEEQLLKEPDSRRDELVKRYNGRERVYLRKRRTRISHGDFQTITQVGQGGYGSVWLARKRDTKEIVALKIMNKSVLHKMDEIRHVLTERDILTTANSEWLVRLLYAFQDTSNIYLAMEFVPGGDFRTLLSNSGVLRDHHAKFYATEMFLAIDALHQLGYIHRDLKPENFLVGASGHIKLTDFGLSSGIISKKKIESMKIRLQEVNNVVVPERSMRERRQVFRTLLSQDPVYAHSVVGSPDYMAPEVLRGENYNHSVDYWSLGCIMYECLSGFPPFSGSNVNETWSNLKNWRKCFQRPHYDDPRDLEFNWRDDAWDFVCHCITDPKDRFCSLKQVMQHPYFSKIDWKNVRTAYRPPFVPDLNSEIDAGYFDDFTNENDMSKYKEVHEKQAAIANMVNTFNKPKRNAFIGFTFRHQKNSHPTSSSSALSSPLSAPSFGTLL.

S56, S60, S65, and S86 each carry phosphoserine. Basic and acidic residues predominate over residues 93 to 108; that stretch reads DRSGELSYKDNNHWSD. Residues 93–118 are disordered; it reads DRSGELSYKDNNHWSDRSSTGSPRWE. Over residues 109–118 the composition is skewed to polar residues; that stretch reads RSSTGSPRWE. The Protein kinase domain occupies 208–508; sequence FQTITQVGQG…LKQVMQHPYF (301 aa). ATP-binding positions include 214 to 222 and K237; that span reads VGQGGYGSV. Residue Y219 is modified to Phosphotyrosine. D331 functions as the Proton acceptor in the catalytic mechanism. S402 carries the phosphoserine modification. Residues 509 to 589 enclose the AGC-kinase C-terminal domain; that stretch reads SKIDWKNVRT…RHQKNSHPTS (81 aa). The segment at 586–607 is disordered; sequence HPTSSSSALSSPLSAPSFGTLL. Positions 589–607 are enriched in low complexity; it reads SSSSALSSPLSAPSFGTLL.

It belongs to the protein kinase superfamily. Ser/Thr protein kinase family. As to quaternary structure, interacts with mob1 and cdc11.

The protein resides in the cytoplasm. Its subcellular location is the cytoskeleton. The protein localises to the microtubule organizing center. It is found in the spindle pole body. The catalysed reaction is L-seryl-[protein] + ATP = O-phospho-L-seryl-[protein] + ADP + H(+). The enzyme catalyses L-threonyl-[protein] + ATP = O-phospho-L-threonyl-[protein] + ADP + H(+). Its function is as follows. Part of a signaling pathway. Required for initiation of medial ring constriction and septation. The sequence is that of Serine/threonine-protein kinase sid2 (sid2) from Schizosaccharomyces pombe (strain 972 / ATCC 24843) (Fission yeast).